A 580-amino-acid chain; its full sequence is Protein O-linked-mannose beta-1,4-N-acetylglucosaminyltransferase 2 (580 aa).

Residues 1-4 (MHLS) lie on the Cytoplasmic side of the membrane. The chain crosses the membrane as a helical; Signal-anchor for type II membrane protein span at residues 5–25 (AVLNALLVSVLAAVLWKHVRL). Residues 26-580 (REHAAALEEE…PFADVLVCNT (555 aa)) lie on the Lumenal side of the membrane. Residues Asn-99 and Asn-276 are each glycosylated (N-linked (GlcNAc...) asparagine). The Fibronectin type-III domain maps to 488–580 (ARCQASVQGA…PFADVLVCNT (93 aa)).

This sequence belongs to the glycosyltransferase 61 family.

It is found in the endoplasmic reticulum membrane. It carries out the reaction 3-O-(alpha-D-mannosyl)-L-threonyl-[protein] + UDP-N-acetyl-alpha-D-glucosamine = 3-O-(N-acetyl-beta-D-glucosaminyl-(1-&gt;4)-alpha-D-mannosyl)-L-threonyl-[protein] + UDP + H(+). It participates in protein modification; protein glycosylation. Its function is as follows. O-linked mannose beta-1,4-N-acetylglucosaminyltransferase that transfers UDP-N-acetyl-D-glucosamine to the 4-position of the mannose to generate N-acetyl-D-glucosamine-beta-1,4-O-D-mannosylprotein. Involved in the biosynthesis of the phosphorylated O-mannosyl trisaccharide (N-acetylgalactosamine-beta-3-N-acetylglucosamine-beta-4-(phosphate-6-)mannose), a carbohydrate structure present in alpha-dystroglycan (DAG1), which is required for binding laminin G-like domain-containing extracellular proteins with high affinity. The chain is Protein O-linked-mannose beta-1,4-N-acetylglucosaminyltransferase 2 (POMGNT2) from Canis lupus familiaris (Dog).